A 286-amino-acid polypeptide reads, in one-letter code: Glucose import system permease protein GlcT (286 aa).

6 consecutive transmembrane segments (helical) span residues 6 to 26, 71 to 91, 103 to 123, 154 to 174, 199 to 219, and 260 to 280; these read TIIL…LVIW, VILV…LYFL, IVIY…LWLF, LVLV…LAGF, ILIP…FLFS, and VATM…LTVI. Residues 63–275 enclose the ABC transmembrane type-1 domain; that stretch reads LLHSIELSVI…LIATIIIIPY (213 aa).

Belongs to the binding-protein-dependent transport system permease family. As to quaternary structure, the complex is composed of two ATP-binding proteins (GlcV), two transmembrane proteins (GlcT and GlcU) and a solute-binding protein (GlcS).

The protein resides in the cell membrane. Its function is as follows. Part of the ABC transporter complex GlcSTUV involved in glucose uptake. Responsible for the translocation of the substrate across the membrane. This Saccharolobus solfataricus (strain ATCC 35092 / DSM 1617 / JCM 11322 / P2) (Sulfolobus solfataricus) protein is Glucose import system permease protein GlcT.